A 96-amino-acid chain; its full sequence is ESAT-6-like protein SAG0230 (96 aa).

It belongs to the WXG100 family. sagEsxA-like subfamily. In terms of assembly, homodimer.

The chain is ESAT-6-like protein SAG0230 from Streptococcus agalactiae serotype V (strain ATCC BAA-611 / 2603 V/R).